Here is a 751-residue protein sequence, read N- to C-terminus: Semaphorin-3C (751 aa).

The first 20 residues, 1 to 20 (MAFRAICVLVGVFICSICVR), serve as a signal peptide directing secretion. The Sema domain maps to 28-511 (RVYLTFDELR…SNEGVSQVSL (484 aa)). Residue asparagine 81 is glycosylated (N-linked (GlcNAc...) asparagine). The cysteines at positions 101 and 112 are disulfide-linked. N-linked (GlcNAc...) asparagine glycosylation occurs at asparagine 123. Cysteines 130 and 139 form a disulfide. N-linked (GlcNAc...) asparagine glycans are attached at residues asparagine 252 and asparagine 268. 2 disulfides stabilise this stretch: cysteine 266–cysteine 378 and cysteine 290–cysteine 338. A glycan (N-linked (GlcNAc...) asparagine) is linked at asparagine 465. Cysteine 514 and cysteine 532 form a disulfide bridge. The Ig-like C2-type domain maps to 571–655 (AYRNAAEIVQ…TENSFKQTIA (85 aa)). Asparagine 585 and asparagine 586 each carry an N-linked (GlcNAc...) asparagine glycan. An intrachain disulfide couples cysteine 643 to cysteine 709.

This sequence belongs to the semaphorin family. As to quaternary structure, interacts with PLXND1.

The protein localises to the secreted. Functionally, binds to plexin family members and plays an important role in the regulation of developmental processes. Required for normal cardiovascular development during embryogenesis. Functions as attractant for growing axons, and thereby plays an important role in axon growth and axon guidance. The polypeptide is Semaphorin-3C (Sema3c) (Mus musculus (Mouse)).